The primary structure comprises 198 residues: Probable GTP-binding protein EngB (198 aa).

In terms of domain architecture, EngB-type G spans 22-195 (NRNEVAFVGR…IDKLFLEFAT (174 aa)). Residues 30-37 (GRSNVGKS), 57-61 (GKTRL), 75-78 (DLPG), 142-145 (TKSD), and 174-176 (YSS) contribute to the GTP site. Mg(2+)-binding residues include serine 37 and threonine 59.

This sequence belongs to the TRAFAC class TrmE-Era-EngA-EngB-Septin-like GTPase superfamily. EngB GTPase family. It depends on Mg(2+) as a cofactor.

Functionally, necessary for normal cell division and for the maintenance of normal septation. This is Probable GTP-binding protein EngB from Clostridium botulinum (strain Alaska E43 / Type E3).